Consider the following 795-residue polypeptide: Phenylalanine--tRNA ligase beta subunit (795 aa).

The tRNA-binding domain maps to 39–148; it reads AGAFHGVVVG…ADAPLGTDIR (110 aa). Positions 401 to 476 constitute a B5 domain; it reads PARATIALRR…RVYGYNNIPN (76 aa). The Mg(2+) site is built by Asp454, Asp460, Glu463, and Glu464. The FDX-ACB domain occupies 701-794; sequence SRFPANRRDI…LKQRFQASLR (94 aa).

It belongs to the phenylalanyl-tRNA synthetase beta subunit family. Type 1 subfamily. In terms of assembly, tetramer of two alpha and two beta subunits. Mg(2+) serves as cofactor.

The protein resides in the cytoplasm. The catalysed reaction is tRNA(Phe) + L-phenylalanine + ATP = L-phenylalanyl-tRNA(Phe) + AMP + diphosphate + H(+). The protein is Phenylalanine--tRNA ligase beta subunit (pheT) of Dickeya dadantii (strain 3937) (Erwinia chrysanthemi (strain 3937)).